The following is a 1209-amino-acid chain: Phospholipid-transporting ATPase ID (1209 aa).

Over residues 1–12 (MTVPKEMPEKWA) the composition is skewed to basic and acidic residues. The tract at residues 1 to 36 (MTVPKEMPEKWARAQAPPSWSRKKPSWGTEEERRAR) is disordered. At 1 to 64 (MTVPKEMPEK…TSKYNILTFL (64 aa)) the chain is on the cytoplasmic side. A helical membrane pass occupies residues 65 to 86 (PVNLFEQFQEVANTYFLFLLIL). Residues 87–92 (QLIPQI) are Exoplasmic loop-facing. The chain crosses the membrane as a helical span at residues 93–112 (SSLSWFTTIVPLVLVLTITA). Over 113-295 (VKDATDDYFR…TSIDRLMNTL (183 aa)) the chain is Cytoplasmic. Residues 296 to 317 (VLWIFGFLVCMGVILAIGNAIW) form a helical membrane-spanning segment. Over 318 to 346 (EHEVGMRFQVYLPWDEAVDSAFFSGFLSF) the chain is Exoplasmic loop. Residues 347–368 (WSYIIILNTVVPISLYVSVEVI) traverse the membrane as a helical segment. Over 369–889 (RLGHSYFINW…GRWSYLRMCK (521 aa)) the chain is Cytoplasmic. The 4-aspartylphosphate intermediate role is filled by Asp-411. The ATP site is built by Asp-411, Lys-412, Thr-413, Glu-515, Phe-556, Lys-579, Arg-613, Thr-693, Gly-694, Asp-695, Arg-807, and Lys-813. Residue Asp-411 coordinates Mg(2+). Position 413 (Thr-413) interacts with Mg(2+). Asp-833 contacts Mg(2+). ATP-binding residues include Asn-836 and Asp-837. A Mg(2+)-binding site is contributed by Asp-837. Residues 890-910 (FLCYFFYKNFAFTMVHFWFGF) form a helical membrane-spanning segment. The Exoplasmic loop portion of the chain corresponds to 911–922 (FCGFSAQTVYDQ). A helical transmembrane segment spans residues 923–942 (YFITLYNIVYTSLPVLAMGV). At 943 to 972 (FDQDVPEQRSMEYPKLYEPGQLNLLFNKRE) the chain is on the cytoplasmic side. Residues 973–994 (FFICIAQGIYTSVLMFFIPYGV) traverse the membrane as a helical segment. Over 995–1008 (FADATRDDGTQLAD) the chain is Exoplasmic loop. A helical membrane pass occupies residues 1009–1031 (YQSFAVTVATSLVIVVSVQIGLD). Residues 1032-1037 (TGYWTA) lie on the Cytoplasmic side of the membrane. Residues 1038–1058 (INHFFIWGSLAVYFAILFAMH) traverse the membrane as a helical segment. The Exoplasmic loop segment spans residues 1059–1078 (SNGLFDMFPNQFRFVGNAQN). A helical membrane pass occupies residues 1079-1103 (TLAQPTVWLTIVLTTVVCIMPVVAF). Residues 1104–1209 (RFLRLNLKPD…SGGADKPLKG (106 aa)) lie on the Cytoplasmic side of the membrane. Ser-1175 bears the Phosphoserine mark. The disordered stretch occupies residues 1181–1209 (SSSWIESLRRKKSDSASSPSGGADKPLKG). Low complexity predominate over residues 1195-1209 (SASSPSGGADKPLKG).

It belongs to the cation transport ATPase (P-type) (TC 3.A.3) family. Type IV subfamily. Component of a P4-ATPase flippase complex which consists of a catalytic alpha subunit ATP8B2 and an accessory beta subunit TMEM30A or TMEM30B. Requires Mg(2+) as cofactor. As to expression, isoform 3 is ubiquitous, with highest expression in aorta, cerebellum and uterus.

The protein localises to the cell membrane. It is found in the endoplasmic reticulum membrane. The catalysed reaction is ATP + H2O + phospholipidSide 1 = ADP + phosphate + phospholipidSide 2.. It carries out the reaction a 1,2-diacyl-sn-glycero-3-phosphocholine(out) + ATP + H2O = a 1,2-diacyl-sn-glycero-3-phosphocholine(in) + ADP + phosphate + H(+). Functionally, catalytic component of P4-ATPase flippase complex, which catalyzes the hydrolysis of ATP coupled to the transport of phosphatidylcholine (PC) from the outer to the inner leaflet of the plasma membrane. May contribute to the maintenance of membrane lipid asymmetry. The chain is Phospholipid-transporting ATPase ID from Homo sapiens (Human).